Reading from the N-terminus, the 470-residue chain is Poly(A) polymerase catalytic subunit (470 aa).

Residues Asp192 and Asp194 contribute to the active site.

It belongs to the poxviridae poly(A) polymerase catalytic subunit family. Heterodimer of a large (catalytic) subunit and a small (regulatory) subunit.

It catalyses the reaction RNA(n) + ATP = RNA(n)-3'-adenine ribonucleotide + diphosphate. In terms of biological role, polymerase that creates the 3'-poly(A) tail of mRNA's. This chain is Poly(A) polymerase catalytic subunit (PAPL), found in Oryctolagus cuniculus (Rabbit).